The following is a 1245-amino-acid chain: MANYLAQFQTIKSSCDRIVVAVEDVSDLWLNVKESFEQRLPVKKACLNNKARNPVFVENLPAEFIQTTDSRLRSRFPQDQYLFWFREPYATVVLVSCEDLDEFKTILKPRLKLIVQNDEREWFIVFVSKAHPSNDQASKMAKRVYARLESDFNTKKRERCCKFDLHGPDAEFWDDFDSKMVDCIRNTLDRRVQFYEEEIRRLSEQRFTPIWNFCNFFILKESLAFMFEMTNLHEDSLREYDELELCYSESVNSPGKHREFGGLDTGDDQAALLNPGFKALTQIVQDDVFREFEFRQYIFACQAKLLFKLHRPIEVAARGYAFVVSFSKTLALQENGLPFCFREVWVITACMDLIKATTSHYDGTAVAIDSEREFCRIQGDLYSLCRIKFLRLAYLIGYGVEIEKSPVNSASLSMLPWPKPATWPSIPPDSSAETMAKEKMILQAKSREKIFNIHRKPLPLEPSLLLREANRRRAFLSVGNISELYDSGDGSGLDANSKPSPNKSASNYMARTMSGPATSETSLPVDRPMRLSEIHVAAEHALKQTVSDPNFMTSLSSLEEFEKRYMELTKGAADNYHHSWWKRHGVVLDGEIAALFFKHENYDLAAKSYEKVCALYSAEGWEELLADVLPDLAECQKILNDEAGYLTSCVKLLSLESGLFSSKERQAFQSEVVRLAHSEMKHPVPLDVSSLITFAGNPAPPLELCDGDPGTLSVAVWSAFPDDITLESLSLRLSASSSADEGLKAIKSSDARVLVPGRNIITFDIPPQKPGSYVLGALTGQIGKLSFRSHGFSQDGPVDTDEFMSFEKPTRPVLKVRKPRALVDITPAVSSALLMNELQWIGLIVKPIDYSLKDGILHIDAGAGLKIEESQMIEIETYGSDVEHVGGTDASKTSSSSTDTRKVEKVPIEDGKIKIPDWASDVTTLVWFPVRAIDDTIARGASPASPQKQSIVDGMRMIALKLEFGVFLNQVFERTIAVHFTNPFHVSTRVVDKCYDGTLLLQVILHSEVKATLHVKDIWLDLQSGFEHTGKGDGRPTSNLFPLVIAPSSRAGILFVIRLSALGDMDELEKADSMLNIKYGISGDRTTGAHSPVPVKPDDSEELVFKIAVKMKRPVLDPCVAVGFLPFSSDCLRVGQLVNMRWRVERLKNPEDASLLADEILYQVDANPQNWMVAGRKCGHVSLSNKQGSRIEITVTCVPLVSGYVHPPQLGLPHVGEANISCNPAGPHLVCVLPPTLSTSYCIPA.

2 disordered regions span residues 488 to 524 (GDGS…TSLP) and 884 to 903 (HVGG…TRKV). Low complexity-rich tracts occupy residues 495–507 (ANSK…SASN) and 888–898 (TDASKTSSSST).

The protein belongs to the TMEM1 family. As to quaternary structure, part of the multisubunit TRAPP (transport protein particle) II complex composed of BET3, BET5, TRS20, TRS23, TRS31, TRS33, TRS65, TRS85, TRS120 and TRS130.

The protein localises to the golgi apparatus. It localises to the trans-Golgi network. It is found in the early endosome. Its function is as follows. Specific subunit of the TRAPP II complex, a highly conserved vesicle tethering complex that is required for the proper transport of proteins in post-Golgi trafficking pathways to the growing cell plate in mitotic active cells. The protein is Trafficking protein particle complex II-specific subunit 130 homolog of Oryza sativa subsp. japonica (Rice).